Consider the following 119-residue polypeptide: Large ribosomal subunit protein eL31y (119 aa).

It belongs to the eukaryotic ribosomal protein eL31 family.

In Arabidopsis thaliana (Mouse-ear cress), this protein is Large ribosomal subunit protein eL31y (RPL31B).